We begin with the raw amino-acid sequence, 701 residues long: Dynein axonemal intermediate chain 1 (701 aa).

Disordered regions lie at residues 1–45 (MPSK…VRPP) and 119–165 (EMVA…DIPA). Phosphoserine occurs at positions 124 and 127. Acidic residues predominate over residues 136–155 (ENLEEEEEPKEGEGEAEAEA). WD repeat units follow at residues 382-422 (SSES…SQPC), 431-474 (KHTD…LVHI), 539-579 (AHNM…PMFI), 581-621 (DLNS…YEAI), and 629-668 (KKKN…RKMP).

It belongs to the dynein intermediate chain family. Consists of at least two heavy chains and a number of intermediate and light chains. Interacts with BICD2. Interacts with CFAP45 and CFAP52. Interacts with CFAP53.

The protein localises to the cytoplasm. Its subcellular location is the cytoskeleton. The protein resides in the cilium axoneme. Its function is as follows. Part of the dynein complex of respiratory cilia. In Mus musculus (Mouse), this protein is Dynein axonemal intermediate chain 1 (Dnai1).